Reading from the N-terminus, the 176-residue chain is Sigma intracellular receptor 2 (176 aa).

Over methionine 1–glycine 9 the chain is Cytoplasmic. The helical transmembrane segment at leucine 10–leucine 30 threads the bilayer. Positions leucine 10–leucine 158 constitute an EXPERA domain. The Lumenal segment spans residues glutamine 31–serine 68. The helical transmembrane segment at phenylalanine 69–phenylalanine 89 threads the bilayer. 2 residues coordinate cholesterol: valine 75 and glutamine 77. Residues lysine 90 to proline 99 are Cytoplasmic-facing. A helical transmembrane segment spans residues alanine 100–leucine 120. Topologically, residues aspartate 121–leucine 141 are lumenal. The chain crosses the membrane as a helical span at residues phenylalanine 142 to valine 162. The Cytoplasmic portion of the chain corresponds to arginine 163–lysine 176. An ER retention motif motif is present at residues lysine 172–lysine 176.

Belongs to the TMEM97/sigma-2 receptor family. In terms of assembly, homodimer. Interacts with NPC1; the interaction impairs NPC1-mediated cholesterol transport. Interacts with PGRMC1 and LDLR; the interaction increases LDL internalization. Interacts with histatin 1/HTN1; the interaction induces HTN1-stimulating wound healing. Interacts with TSPO.

It localises to the rough endoplasmic reticulum membrane. The protein resides in the nucleus membrane. Sigma-2 receptor which contributes to ameliorate dysfunctional cellular processes and slow degenerative progression by regulating cell functions including cholesterol biosynthesis/trafficking, membrane trafficking, autophagy, lipid membrane-bound protein trafficking, and receptor stabilization at the cell surface. Forms a ternary complex with PGRMC1 receptor and low density lipoprotein receptor/LDLR at the plasma membrane, which increases LDLR-mediated LDL cholesterol internalization. Decreases lysosomal sterol transporter NPC1 availability to the cell, probably through NPC1-binding, hence controlling lipid transport, including cholesterol and LBPA, outside of late endosome/lysosome. Binds regio- and stereoselective ligand 20(S)-hydroxycholesterol (20(S)-OHC) which enhances TMEM97-NPC1 interaction and decreases TMEM97-PGRMC1 and TMEM97-TSPO interactions, thereby linking OHC binding to cholesterol homeostasis. Also able to bind cholesterol. Binds histatin 1 (Hst 1)/HN1 salivary peptide at the ER membrane, which is critical for increasing mitochondria-ER contacts and stimulating Hst1 wound healing properties. May alter the activity of some cytochrome P450 proteins. Although shows homologies with sterol isomerases (EXPERA domain), not able to catalyze sterol isomerization. However, may act as sensors of these molecules. Acts as a quality control factor in the ER, promoting the proteolytic degradation of nonproductive and extramitochondrial precursor proteins in the ER membrane thus removing them from the ER surface. The sequence is that of Sigma intracellular receptor 2 (TMEM97) from Bos taurus (Bovine).